We begin with the raw amino-acid sequence, 461 residues long: Bifunctional protein GlmU (461 aa).

Residues 1 to 235 (MKAIILAAGL…ITEIFGVNDR (235 aa)) form a pyrophosphorylase region. UDP-N-acetyl-alpha-D-glucosamine-binding positions include 6 to 9 (LAAG), Lys-20, Gln-71, and 77 to 78 (GT). Position 102 (Asp-102) interacts with Mg(2+). The UDP-N-acetyl-alpha-D-glucosamine site is built by Gly-145, Glu-160, Asn-175, and Asn-233. Position 233 (Asn-233) interacts with Mg(2+). Positions 236 to 256 (WELSFAESVIKMRILENLARS) are linker. Residues 257–461 (GVTIHSPESV…LEDKSKVKDE (205 aa)) form an N-acetyltransferase region. UDP-N-acetyl-alpha-D-glucosamine-binding residues include Arg-339 and Lys-357. The Proton acceptor role is filled by His-369. Residues Tyr-372 and Asn-383 each coordinate UDP-N-acetyl-alpha-D-glucosamine. Acetyl-CoA contacts are provided by Ala-386, Ser-411, Gly-429, and Arg-446.

The protein in the N-terminal section; belongs to the N-acetylglucosamine-1-phosphate uridyltransferase family. In the C-terminal section; belongs to the transferase hexapeptide repeat family. Homotrimer. Mg(2+) is required as a cofactor.

It localises to the cytoplasm. It catalyses the reaction alpha-D-glucosamine 1-phosphate + acetyl-CoA = N-acetyl-alpha-D-glucosamine 1-phosphate + CoA + H(+). The enzyme catalyses N-acetyl-alpha-D-glucosamine 1-phosphate + UTP + H(+) = UDP-N-acetyl-alpha-D-glucosamine + diphosphate. The protein operates within nucleotide-sugar biosynthesis; UDP-N-acetyl-alpha-D-glucosamine biosynthesis; N-acetyl-alpha-D-glucosamine 1-phosphate from alpha-D-glucosamine 6-phosphate (route II): step 2/2. It functions in the pathway nucleotide-sugar biosynthesis; UDP-N-acetyl-alpha-D-glucosamine biosynthesis; UDP-N-acetyl-alpha-D-glucosamine from N-acetyl-alpha-D-glucosamine 1-phosphate: step 1/1. Its pathway is bacterial outer membrane biogenesis; LPS lipid A biosynthesis. In terms of biological role, catalyzes the last two sequential reactions in the de novo biosynthetic pathway for UDP-N-acetylglucosamine (UDP-GlcNAc). The C-terminal domain catalyzes the transfer of acetyl group from acetyl coenzyme A to glucosamine-1-phosphate (GlcN-1-P) to produce N-acetylglucosamine-1-phosphate (GlcNAc-1-P), which is converted into UDP-GlcNAc by the transfer of uridine 5-monophosphate (from uridine 5-triphosphate), a reaction catalyzed by the N-terminal domain. The polypeptide is Bifunctional protein GlmU (Hydrogenobaculum sp. (strain Y04AAS1)).